Here is a 333-residue protein sequence, read N- to C-terminus: Transaldolase (333 aa).

The active-site Schiff-base intermediate with substrate is the lysine 135.

This sequence belongs to the transaldolase family. Type 1 subfamily. Homodimer.

The protein resides in the cytoplasm. The enzyme catalyses D-sedoheptulose 7-phosphate + D-glyceraldehyde 3-phosphate = D-erythrose 4-phosphate + beta-D-fructose 6-phosphate. It participates in carbohydrate degradation; pentose phosphate pathway; D-glyceraldehyde 3-phosphate and beta-D-fructose 6-phosphate from D-ribose 5-phosphate and D-xylulose 5-phosphate (non-oxidative stage): step 2/3. Functionally, transaldolase is important for the balance of metabolites in the pentose-phosphate pathway. This chain is Transaldolase, found in Prochlorococcus marinus subsp. pastoris (strain CCMP1986 / NIES-2087 / MED4).